An 882-amino-acid chain; its full sequence is Valine--tRNA ligase (882 aa).

Residues 50–60 (PNVTGKLHLGH) carry the 'HIGH' region motif. Residues 526–530 (KMSKS) carry the 'KMSKS' region motif. Lys529 serves as a coordination point for ATP. Positions 810 to 881 (LEALIDLDLE…VLERIETLKE (72 aa)) form a coiled coil.

Belongs to the class-I aminoacyl-tRNA synthetase family. ValS type 1 subfamily. As to quaternary structure, monomer.

It is found in the cytoplasm. It catalyses the reaction tRNA(Val) + L-valine + ATP = L-valyl-tRNA(Val) + AMP + diphosphate. Its function is as follows. Catalyzes the attachment of valine to tRNA(Val). As ValRS can inadvertently accommodate and process structurally similar amino acids such as threonine, to avoid such errors, it has a 'posttransfer' editing activity that hydrolyzes mischarged Thr-tRNA(Val) in a tRNA-dependent manner. In Listeria innocua serovar 6a (strain ATCC BAA-680 / CLIP 11262), this protein is Valine--tRNA ligase.